We begin with the raw amino-acid sequence, 670 residues long: Leucine-rich repeat-containing protein 45 (670 aa).

5 LRR repeats span residues 87–108, 115–136, 145–166, 173–194, and 201–223; these read TVKSLDLKGNNLRTTGAEALGK, SIRSLILEWNSLGVWEEGFSFF, FLQRLDLRNNQINHHGAGELAM, SLQELDLRWNNIGLLGGRALLN, and TLKKLELAGNNVPSDILKAVEQA. Residues 234–645 adopt a coiled-coil conformation; the sequence is LSETQNRTSV…ISRMKEEEAQ (412 aa).

Homomer.

It is found in the cytoplasm. The protein resides in the cytoskeleton. Its subcellular location is the microtubule organizing center. The protein localises to the centrosome. In terms of biological role, component of the proteinaceous fiber-like linker between two centrioles, required for centrosome cohesion. The chain is Leucine-rich repeat-containing protein 45 (LRRC45) from Gallus gallus (Chicken).